We begin with the raw amino-acid sequence, 384 residues long: Probable 2-heptyl-3-hydroxy-4(1H)-quinolone synthase AqdB2 (384 aa).

The protein belongs to the 3-hydroxybenzoate 6-hydroxylase family.

The catalysed reaction is 2-heptyl-4(1H)-quinolone + NADH + O2 + H(+) = 2-heptyl-3-hydroxy-4(1H)-quinolone + NAD(+) + H2O. In terms of biological role, involved in the degradation of the Pseudomonas aeruginosa quorum sensing signal molecule HHQ (2-heptyl-4-quinolone) to anthranilic acid. Probably catalyzes the hydroxylation of HHQ to PQS (2-heptyl-3-hydroxy-4-quinolone). This Rhodococcus erythropolis (Arthrobacter picolinophilus) protein is Probable 2-heptyl-3-hydroxy-4(1H)-quinolone synthase AqdB2.